The following is a 146-amino-acid chain: Heat-stable 19 kDa antigen (146 aa).

The first 20 residues, 1–20 (MKFSLLSAIAAAVFVPFTSA), serve as a signal peptide directing secretion.

This sequence belongs to the cerato-platanin family. In terms of processing, glycosylated.

Its subcellular location is the secreted. This chain is Heat-stable 19 kDa antigen (CSA), found in Coccidioides immitis (strain RS) (Valley fever fungus).